A 142-amino-acid polypeptide reads, in one-letter code: Large ribosomal subunit protein uL11 (142 aa).

It belongs to the universal ribosomal protein uL11 family. As to quaternary structure, part of the ribosomal stalk of the 50S ribosomal subunit. Interacts with L10 and the large rRNA to form the base of the stalk. L10 forms an elongated spine to which L12 dimers bind in a sequential fashion forming a multimeric L10(L12)X complex. One or more lysine residues are methylated.

Forms part of the ribosomal stalk which helps the ribosome interact with GTP-bound translation factors. This is Large ribosomal subunit protein uL11 from Citrobacter koseri (strain ATCC BAA-895 / CDC 4225-83 / SGSC4696).